We begin with the raw amino-acid sequence, 71 residues long: Non-disulfide-bridged peptide 5.5 (71 aa).

A signal peptide spans 1-23; sequence MKTQFIVLIVAIVFLQLLSQSEA. Leucine 36 carries the post-translational modification Leucine amide. Residues 40-71 constitute a propeptide that is removed on maturation; the sequence is DLRHLDLDQFDDMFDQPEISAADMKFLQDLLR.

It belongs to the non-disulfide-bridged peptide (NDBP) superfamily. Short antimicrobial peptide (group 4) family. Expressed by the venom gland.

It localises to the secreted. Its subcellular location is the target cell membrane. Its function is as follows. Antimicrobial peptide. Is active on Mycobacterium abscessus subsp. massiliense (MBC=200 uM), a rapidly growing and emerging pathogen associated with healthcare infections. Also shows antifungal activities. Has a weak hemolytic activity on human erythrocytes (10% at 610 uM), indicating a low toxicity (therapeutic index (TI)=3.05). In addition, treatment of infected macrophages reduces the bacterial load. In vivo, treatment of M.abscessus-infected mice causes a decrease in the bacterial load in the lungs and liver. The chain is Non-disulfide-bridged peptide 5.5 from Hoffmannihadrurus gertschi (Scorpion).